The sequence spans 139 residues: Tetra-peptide repeat homeobox-like protein (139 aa).

2 disordered regions span residues 1–22 and 78–139; these read MQDP…RQRQ and ERWF…QQPQ. The homeobox DNA-binding region spans 20–79; that stretch reads QRQDRTIYNWKQQEVLENHFKEEQYPDYDTRQELAEMLNLREYQVQVWFKNRRAKRSRER. The span at 82-139 shows a compositional bias: low complexity; that stretch reads QKQLQQLQKHPQQQHPQQQHPQQQLQQQQPQQQPQQQQPQQQPQQQQPQQQQLHQQPQ.

It belongs to the paired homeobox family.

The protein localises to the nucleus. Its function is as follows. Transcription factor required for zygotic genome activation (ZGA), a critical event in early embryonic development during which the developmental control passes from maternally provided mRNAs to the expression of the zygotic genome after fertilization. Protein produced from maternal transcripts that binds and activates expression of key ZGA marker genes, such as NANOGNB, ZSCAN4, DUXB, KLF5 and DPPA3. Binds to regulatory DNA sequences containing a 5'-TAATCC-3' sequence motif. In Homo sapiens (Human), this protein is Tetra-peptide repeat homeobox-like protein.